Here is a 96-residue protein sequence, read N- to C-terminus: Guanine nucleotide-binding protein alpha-9 subunit (96 aa).

Residues 2–96 (YFHSTAIILF…ISASLKMVGV (95 aa)) enclose the G-alpha domain. A G1 motif region spans residues 9-16 (ILFLNKID). GTP contacts are provided by residues 13 to 16 (NKID) and Ala-69. The G2 motif stretch occupies residues 67 to 72 (TSATDT).

This sequence belongs to the G-alpha family. G proteins are composed of 3 units; alpha, beta and gamma. The alpha chain contains the guanine nucleotide binding site. In terms of tissue distribution, expressed in ASJ neurons.

In terms of biological role, guanine nucleotide-binding proteins (G proteins) are involved as modulators or transducers in various transmembrane signaling systems. Plays a role in innate immunity and maintaining survival in response to metabolites of E.coli. This might be by regulating the expression and signaling of genes such as lys-8, ins-7 and daf-28. Has a role in lifespan to promote longevity. This Caenorhabditis elegans protein is Guanine nucleotide-binding protein alpha-9 subunit.